Consider the following 459-residue polypeptide: Inositol-trisphosphate 3-kinase A (459 aa).

Positions 1–26 (MTLPGHPTGMARPRGAGPCSPGLERA) are disordered. An omega-N-methylarginine mark is found at arginine 35, arginine 55, and arginine 62. A disordered region spans residues 49–164 (AAAGEPRARG…TSEDVGQKSH (116 aa)). Residues 116–132 (RRLSTSSLSSTGSSSLL) are compositionally biased toward low complexity. Phosphoserine is present on residues serine 135 and serine 195. ATP is bound by residues serine 195, lysine 207, 247-249 (QDL), and aspartate 260. Substrate-binding residues include lysine 262 and arginine 283. The segment at 285 to 293 (DMYKKMLAV) is calmodulin-binding. 310-317 (KPRYMQWR) is a substrate binding site. ATP-binding residues include lysine 334 and aspartate 414. Lysine 417 contacts substrate.

It belongs to the inositol phosphokinase (IPK) family.

Its subcellular location is the cytoplasm. It is found in the cytoskeleton. It carries out the reaction 1D-myo-inositol 1,4,5-trisphosphate + ATP = 1D-myo-inositol 1,3,4,5-tetrakisphosphate + ADP + H(+). Its activity is regulated as follows. Activated by calcium/calmodulin. Functionally, catalyzes the phosphorylation of 1D-myo-inositol 1,4,5-trisphosphate (InsP3) into 1D-myo-inositol 1,3,4,5-tetrakisphosphate and participates to the regulation of calcium homeostasis. The sequence is that of Inositol-trisphosphate 3-kinase A from Rattus norvegicus (Rat).